The sequence spans 70 residues: Putative antitoxin VapB34 (70 aa).

In terms of biological role, antitoxin component of a possible type II toxin-antitoxin (TA) system. The cognate toxin is VapC34. The polypeptide is Putative antitoxin VapB34 (vapB34) (Mycobacterium tuberculosis (strain CDC 1551 / Oshkosh)).